The chain runs to 608 residues: MIQVLLVTICLAAFPYQGSSIILESGNVNDYEVVYPRKVTALPEGAVQQKYEDAMQYEFKVNGEPVVLHLEKNKGLFSEDYSETHYSPDGREITTYPSVEDHCYYHGRIQNDADLTASISACNGLKGHFMLQGEMYLIEPLKLSDSEAHAVFKYENVEKEDEAPKMCGVTQNWKSYEPIKKASQSNLTPEQQRYLNAPKFVKLFLVADNIMYLKYGRSLTNVRTRMYDMANILNLIFRRMNIHVAVTDLEIWSDKDKIIVQPSADDTLKSFATWRESVLLKHKSHDNAQLLTGINFNGPTAGLAYLGGICDPMYSTAIVQDHNKIHHLVAIAMAHEMGHNLGIDHDKDTCTCAAKSCVMAGTLSCEASYLFSDCSRKEHRAFLIKNMPQCILKKPSKTDVVSPPVCGNYFVEMGEDCDCGSPATCRDPCCDAATCKLKQGAQCAEGLCCDQCRFKGAGTQCRAAMDECDMADLCTGQSADCTDRFQKNGQPCQNNNGYCYNGTCPTMIKQCTVFFGSNAAVSQDACFQFNLQGNNYGYCRKEQNTKIACEPQNVKCGRLYCTSPEKQNPCNIYYSPSNEDKGMVLPGTKCADGKACSNGQCVDVTTPY.

Residues 1 to 20 (MIQVLLVTICLAAFPYQGSS) form the signal peptide. Positions 21–189 (IILESGNVND…KKASQSNLTP (169 aa)) are excised as a propeptide. The Peptidase M12B domain occupies 199-395 (KFVKLFLVAD…NMPQCILKKP (197 aa)). Disulfide bonds link C310/C390, C350/C374, and C352/C357. H335 serves as a coordination point for Zn(2+). E336 is a catalytic residue. Residues H339 and H345 each coordinate Zn(2+). The Disintegrin domain occupies 403–488 (PPVCGNYFVE…ADCTDRFQKN (86 aa)). Ca(2+)-binding residues include V405, N408, F410, E412, E415, and D418. Disulfide bonds link C406–C435, C417–C430, C419–C425, C429–C452, C443–C449, C448–C474, C461–C481, C468–C499, C492–C504, C511–C561, C526–C570, C539–C549, C556–C596, and C590–C601. Positions 467–469 (ECD) match the D/ECD-tripeptide motif. Residues D469, M470, D472, D483, and R484 each contribute to the Ca(2+) site. The N-linked (GlcNAc...) asparagine glycan is linked to N501.

This sequence belongs to the venom metalloproteinase (M12B) family. P-III subfamily. P-IIIc sub-subfamily. In terms of assembly, homodimer; disulfide-linked. Zn(2+) serves as cofactor. As to expression, expressed by the venom gland.

The protein localises to the secreted. Its activity is regulated as follows. Inhibited by EDTA and EGTA. Not inhibited by PMSF, antipain, pepstatin, and iodoacetamide. Its function is as follows. Strongly inhibits the collagen-induced human platelet aggregation. Hydrolyzes the Aalpha-chain of fibrinogen (FGA), without cleavage of Bbeta- and gamma-chains. Induces apoptosis and strongly inhibits proliferation of endothelial cells as well as adhesion of the cells to extracellular matrix proteins. This is Zinc metalloproteinase-disintegrin-like agkihagin from Deinagkistrodon acutus (Hundred-pace snake).